A 172-amino-acid polypeptide reads, in one-letter code: MVDKRESYTKEDLLASGRGELFGAKGPQLPAPNMLMMDRVVKMTETGGNFDKGYVEAELDINPDLWFFGCHFIGDPVMPGCLGLDAMWQLVGFYLGWLGGEGKGRALGVGEVKFTGQVLPTARKVTYRIHFKRIVNRRLIMGLADGEVLVDGRLIYTAHDLKVGLFQDTSAF.

The active site involves H71.

Belongs to the thioester dehydratase family. FabA subfamily. In terms of assembly, homodimer.

The protein resides in the cytoplasm. The enzyme catalyses a (3R)-hydroxyacyl-[ACP] = a (2E)-enoyl-[ACP] + H2O. It catalyses the reaction (3R)-hydroxydecanoyl-[ACP] = (2E)-decenoyl-[ACP] + H2O. The catalysed reaction is (2E)-decenoyl-[ACP] = (3Z)-decenoyl-[ACP]. It participates in lipid metabolism; fatty acid biosynthesis. Necessary for the introduction of cis unsaturation into fatty acids. Catalyzes the dehydration of (3R)-3-hydroxydecanoyl-ACP to E-(2)-decenoyl-ACP and then its isomerization to Z-(3)-decenoyl-ACP. Can catalyze the dehydratase reaction for beta-hydroxyacyl-ACPs with saturated chain lengths up to 16:0, being most active on intermediate chain length. This Salmonella agona (strain SL483) protein is 3-hydroxydecanoyl-[acyl-carrier-protein] dehydratase.